Consider the following 155-residue polypeptide: uncharacterized protein (155 aa).

A mitochondrion-targeting transit peptide spans methionine 1 to leucine 17. Residues tryptophan 111 to arginine 155 form a disordered region. The span at arginine 113 to valine 124 shows a compositional bias: basic residues. The span at alanine 125–arginine 155 shows a compositional bias: basic and acidic residues.

Belongs to the prokaryotic/mitochondrial release factor family.

Its subcellular location is the mitochondrion. This is an uncharacterized protein from Saccharomyces cerevisiae (strain ATCC 204508 / S288c) (Baker's yeast).